The primary structure comprises 258 residues: Ubiquinone/menaquinone biosynthesis C-methyltransferase UbiE (258 aa).

The segment at 1–20 is disordered; it reads MSESRTSADGGMETSYGFRE. S-adenosyl-L-methionine contacts are provided by residues T81, D102, and 130–131; that span reads NA.

Belongs to the class I-like SAM-binding methyltransferase superfamily. MenG/UbiE family.

It carries out the reaction a 2-demethylmenaquinol + S-adenosyl-L-methionine = a menaquinol + S-adenosyl-L-homocysteine + H(+). The enzyme catalyses a 2-methoxy-6-(all-trans-polyprenyl)benzene-1,4-diol + S-adenosyl-L-methionine = a 5-methoxy-2-methyl-3-(all-trans-polyprenyl)benzene-1,4-diol + S-adenosyl-L-homocysteine + H(+). Its pathway is quinol/quinone metabolism; menaquinone biosynthesis; menaquinol from 1,4-dihydroxy-2-naphthoate: step 2/2. The protein operates within cofactor biosynthesis; ubiquinone biosynthesis. In terms of biological role, methyltransferase required for the conversion of demethylmenaquinol (DMKH2) to menaquinol (MKH2) and the conversion of 2-polyprenyl-6-methoxy-1,4-benzoquinol (DDMQH2) to 2-polyprenyl-3-methyl-6-methoxy-1,4-benzoquinol (DMQH2). The sequence is that of Ubiquinone/menaquinone biosynthesis C-methyltransferase UbiE from Rhizobium etli (strain ATCC 51251 / DSM 11541 / JCM 21823 / NBRC 15573 / CFN 42).